The chain runs to 226 residues: Small ribosomal subunit protein uS5 (226 aa).

Residues Met-1–Glu-71 form a disordered region. Residues Ala-24–Arg-54 show a composition bias toward low complexity. The region spanning Phe-72–Ile-135 is the S5 DRBM domain.

The protein belongs to the universal ribosomal protein uS5 family. Part of the 30S ribosomal subunit. Contacts proteins S4 and S8.

With S4 and S12 plays an important role in translational accuracy. Its function is as follows. Located at the back of the 30S subunit body where it stabilizes the conformation of the head with respect to the body. This Mycoplasmoides gallisepticum (strain R(low / passage 15 / clone 2)) (Mycoplasma gallisepticum) protein is Small ribosomal subunit protein uS5.